A 126-amino-acid chain; its full sequence is Ribosome-binding factor A (126 aa).

It belongs to the RbfA family. In terms of assembly, monomer. Binds 30S ribosomal subunits, but not 50S ribosomal subunits or 70S ribosomes.

The protein localises to the cytoplasm. In terms of biological role, one of several proteins that assist in the late maturation steps of the functional core of the 30S ribosomal subunit. Associates with free 30S ribosomal subunits (but not with 30S subunits that are part of 70S ribosomes or polysomes). Required for efficient processing of 16S rRNA. May interact with the 5'-terminal helix region of 16S rRNA. The polypeptide is Ribosome-binding factor A (Thermosipho africanus (strain TCF52B)).